The primary structure comprises 564 residues: MFS-type transporter astH (564 aa).

An N-linked (GlcNAc...) asparagine glycan is attached at Asn23. The segment at 26-59 is disordered; sequence KDTLVNCSPDPENPEKGQASSPRTQISVDDNEES. A compositionally biased stretch (polar residues) spans 43–53; sequence QASSPRTQISV. The next 4 membrane-spanning stretches (helical) occupy residues 69–89, 106–126, 143–163, and 197–217; these read LAMI…DTTI, DVGW…LSFG, GMFE…GLII, and GILG…GGAF. N-linked (GlcNAc...) asparagine glycosylation is present at Asn220. 6 helical membrane passes run 225–245, 266–286, 297–317, 339–359, 375–395, and 396–416; these read WCFY…ILFF, LLGS…LQWG, IIAL…VQWW, LFSF…PMWF, LPMV…VGAL, and GYYT…AGLL. N-linked (GlcNAc...) asparagine glycosylation occurs at Asn425. Helical transmembrane passes span 461–481 and 537–557; these read TGTV…MSVG and FYVA…MQWI.

This sequence belongs to the major facilitator superfamily. TCR/Tet family.

The protein resides in the membrane. Functionally, MFS-type transporter; part of the gene cluster that mediates the biosynthesis of astellolides, drimane-type sesquiterpene esters that show antimicrobial, anti-inflammatory, and anti-tumor activities. Seems not to be involved in astellolides translocation. The polypeptide is MFS-type transporter astH (Aspergillus oryzae (strain ATCC 42149 / RIB 40) (Yellow koji mold)).